The following is a 156-amino-acid chain: Probable cyclic pyranopterin monophosphate synthase (156 aa).

Residues 73-75 and 109-110 each bind substrate; these read LCH and ME. Aspartate 124 is an active-site residue.

Belongs to the MoaC family. In terms of assembly, homohexamer; trimer of dimers.

The catalysed reaction is (8S)-3',8-cyclo-7,8-dihydroguanosine 5'-triphosphate = cyclic pyranopterin phosphate + diphosphate. The protein operates within cofactor biosynthesis; molybdopterin biosynthesis. Its function is as follows. Catalyzes the conversion of (8S)-3',8-cyclo-7,8-dihydroguanosine 5'-triphosphate to cyclic pyranopterin monophosphate (cPMP). This Pyrococcus furiosus (strain ATCC 43587 / DSM 3638 / JCM 8422 / Vc1) protein is Probable cyclic pyranopterin monophosphate synthase.